A 100-amino-acid chain; its full sequence is Integration host factor subunit alpha (100 aa).

It belongs to the bacterial histone-like protein family. Heterodimer of an alpha and a beta chain.

Its function is as follows. This protein is one of the two subunits of integration host factor, a specific DNA-binding protein that functions in genetic recombination as well as in transcriptional and translational control. The chain is Integration host factor subunit alpha from Cereibacter sphaeroides (strain ATCC 17023 / DSM 158 / JCM 6121 / CCUG 31486 / LMG 2827 / NBRC 12203 / NCIMB 8253 / ATH 2.4.1.) (Rhodobacter sphaeroides).